We begin with the raw amino-acid sequence, 378 residues long: Erythronate-4-phosphate dehydrogenase (378 aa).

Residues S45 and T66 each contribute to the substrate site. Positions 146 and 175 each coordinate NAD(+). The active site involves R208. Position 232 (D232) interacts with NAD(+). The active site involves E237. The active-site Proton donor is the H254. G257 is an NAD(+) binding site. Position 258 (Y258) interacts with substrate.

This sequence belongs to the D-isomer specific 2-hydroxyacid dehydrogenase family. PdxB subfamily. Homodimer.

It localises to the cytoplasm. The catalysed reaction is 4-phospho-D-erythronate + NAD(+) = (R)-3-hydroxy-2-oxo-4-phosphooxybutanoate + NADH + H(+). Its pathway is cofactor biosynthesis; pyridoxine 5'-phosphate biosynthesis; pyridoxine 5'-phosphate from D-erythrose 4-phosphate: step 2/5. Its function is as follows. Catalyzes the oxidation of erythronate-4-phosphate to 3-hydroxy-2-oxo-4-phosphonooxybutanoate. This is Erythronate-4-phosphate dehydrogenase from Pectobacterium carotovorum subsp. carotovorum (strain PC1).